The primary structure comprises 747 residues: Meprin A subunit alpha (747 aa).

The signal sequence occupies residues 1-20 (MLWIQPACLLSLIFSAHIAA). A propeptide spanning residues 21–64 (VSIKHLLNGSDHDTDVGEQKDIFEINLAAGLNLFQGDILLPRTR) is cleaved from the precursor. N-linked (GlcNAc...) asparagine glycans are attached at residues Asn-28 and Asn-139. In terms of domain architecture, Peptidase M12A spans 65–259 (NAMRDPSSRW…IRLNRMYNCT (195 aa)). The Extracellular portion of the chain corresponds to 65–713 (NAMRDPSSRW…FYAGERCQAM (649 aa)). Cystine bridges form between Cys-106–Cys-258, Cys-127–Cys-146, and Cys-268–Cys-430. His-154 serves as a coordination point for Zn(2+). Glu-155 is a catalytic residue. His-158 and His-164 together coordinate Zn(2+). Residues Asn-221, Asn-257, Asn-317, Asn-413, Asn-439, Asn-533, and Asn-540 are each glycosylated (N-linked (GlcNAc...) asparagine). One can recognise an MAM domain in the interval 263–432 (TLLDHCDFEK…ITLTETPCPA (170 aa)). In terms of domain architecture, MATH spans 433 to 594 (GVWTIRNISQ…GDSLIIFVDF (162 aa)). The tract at residues 638–663 (ESLPSSLGQRHPSRQKRSVENTGPME) is disordered. An EGF-like domain is found at 671 to 711 (FRDPCDPNPCQNEGTCVNVKGMASCRCVSGHAFFYAGERCQ). 3 disulfide bridges follow: Cys-675–Cys-686, Cys-680–Cys-695, and Cys-697–Cys-710. Residues 714–741 (HVHGSLLGLLIGCIAGLIFLTFVTFSTT) form a helical membrane-spanning segment. At 742–747 (NGKLRQ) the chain is on the cytoplasmic side.

As to quaternary structure, homotetramer consisting of disulfide-linked alpha subunits, homooligomer consisting of disulfide-linked alpha subunit homodimers, or heterotetramer of two alpha and two beta subunits formed by non-covalent association of two disulfide-linked heterodimers. Genetic factors determine which oligomer(s) will be formed (strain-specific). Interacts with MBL2 through its carbohydrate moiety. This interaction may inhibit its catalytic activity. The cofactor is Zn(2+). In terms of processing, N-glycosylated; contains GlcNAc, galactose, mannose and a small amount of fucose. As to expression, kidney, intestinal brush borders and salivary ducts.

It localises to the membrane. The catalysed reaction is Hydrolysis of protein and peptide substrates preferentially on carboxyl side of hydrophobic residues.. With respect to regulation, inhibited by metal ion chelators EDTA and 1,10-phenanthroline, bradykinin analogs, cysteine, CONA65, and several hydroxamate compounds, particularly tyrosine hydroxamate. Not inhibited by 3,4-dichloroisocourmarin, soybean trypsin inhibitor, or the cysteine proteinase inhibitors iodoacetic acid and E-64. This is Meprin A subunit alpha (Mep1a) from Mus musculus (Mouse).